Reading from the N-terminus, the 328-residue chain is GMP reductase (328 aa).

The Thioimidate intermediate role is filled by C176. Residue 205–228 participates in NADP(+) binding; that stretch reads IIADGGIRTHGDIAKSIRFGASMV.

This sequence belongs to the IMPDH/GMPR family. GuaC type 2 subfamily.

The catalysed reaction is IMP + NH4(+) + NADP(+) = GMP + NADPH + 2 H(+). Its function is as follows. Catalyzes the irreversible NADPH-dependent deamination of GMP to IMP. It functions in the conversion of nucleobase, nucleoside and nucleotide derivatives of G to A nucleotides, and in maintaining the intracellular balance of A and G nucleotides. The sequence is that of GMP reductase from Streptococcus pneumoniae (strain Hungary19A-6).